The primary structure comprises 84 residues: Cytochrome b559 subunit alpha (84 aa).

A helical membrane pass occupies residues 22–36; it reads IIHSITIPSLFVAGF. H24 contacts heme.

This sequence belongs to the PsbE/PsbF family. Heterodimer of an alpha subunit and a beta subunit. PSII is composed of 1 copy each of membrane proteins PsbA, PsbB, PsbC, PsbD, PsbE, PsbF, PsbH, PsbI, PsbJ, PsbK, PsbL, PsbM, PsbT, PsbX, PsbY, PsbZ, Psb30/Ycf12, at least 3 peripheral proteins of the oxygen-evolving complex and a large number of cofactors. It forms dimeric complexes. Heme b is required as a cofactor.

It is found in the plastid. The protein localises to the chloroplast thylakoid membrane. Functionally, this b-type cytochrome is tightly associated with the reaction center of photosystem II (PSII). PSII is a light-driven water:plastoquinone oxidoreductase that uses light energy to abstract electrons from H(2)O, generating O(2) and a proton gradient subsequently used for ATP formation. It consists of a core antenna complex that captures photons, and an electron transfer chain that converts photonic excitation into a charge separation. The sequence is that of Cytochrome b559 subunit alpha from Emiliania huxleyi (Coccolithophore).